The following is a 248-amino-acid chain: Ubiquinone biosynthesis O-methyltransferase (248 aa).

Positions 41, 72, 93, and 136 each coordinate S-adenosyl-L-methionine.

This sequence belongs to the methyltransferase superfamily. UbiG/COQ3 family.

It catalyses the reaction a 3-demethylubiquinol + S-adenosyl-L-methionine = a ubiquinol + S-adenosyl-L-homocysteine + H(+). The catalysed reaction is a 3-(all-trans-polyprenyl)benzene-1,2-diol + S-adenosyl-L-methionine = a 2-methoxy-6-(all-trans-polyprenyl)phenol + S-adenosyl-L-homocysteine + H(+). The protein operates within cofactor biosynthesis; ubiquinone biosynthesis. Functionally, O-methyltransferase that catalyzes the 2 O-methylation steps in the ubiquinone biosynthetic pathway. This chain is Ubiquinone biosynthesis O-methyltransferase, found in Brucella melitensis biotype 2 (strain ATCC 23457).